The chain runs to 131 residues: Protein TAP2 (131 aa).

An N-terminal signal peptide occupies residues 1-22; that stretch reads MAKSSPTYTVLFLLGLLALSTA. Residues 75-101 form a disordered region; that stretch reads ARSGGETDVKKMEGSMPDQGKTAGRDQ.

As to expression, tapetum of anthers.

This Antirrhinum majus (Garden snapdragon) protein is Protein TAP2 (TAP2).